A 543-amino-acid polypeptide reads, in one-letter code: ADP,ATP carrier protein 3 (543 aa).

The next 10 helical transmembrane spans lie at V46 to L66, I86 to F106, M111 to W131, F175 to F195, I209 to V229, E243 to L263, L306 to A326, F346 to I366, L382 to F402, and S504 to L524.

It belongs to the ADP/ATP translocase tlc family.

Its subcellular location is the mitosome membrane. Functionally, ATP transporter involved in the uptake of ATP from the parasite cell cytoplasm into the mitosome matrix. Equilibrates nucleotide pools across a concentration gradient between both sides of the mitosome membrane. This Encephalitozoon cuniculi (strain GB-M1) (Microsporidian parasite) protein is ADP,ATP carrier protein 3 (NTT3).